The primary structure comprises 368 residues: D-amino-acid oxidase (368 aa).

FAD is bound by residues alanine 11, serine 14, lysine 35, histidine 36, cysteine 46, serine 47, glycine 51, asparagine 53, and phenylalanine 174. Residues cysteine 230 and cysteine 285 are joined by a disulfide bond. Tyrosine 244, tyrosine 260, and arginine 308 together coordinate (R)-lactate. Tyrosine 244, tyrosine 260, and arginine 308 together coordinate anthranilate. 5 residues coordinate FAD: arginine 308, glycine 334, glycine 337, tyrosine 338, and glutamine 339. Positions 366 to 368 (ARL) match the Microbody targeting signal motif.

It belongs to the DAMOX/DASOX family. As to quaternary structure, homotetramer. It depends on FAD as a cofactor. The disulfide bond might contribute to the high thermal stability of the protein.

It localises to the peroxisome matrix. It carries out the reaction a D-alpha-amino acid + O2 + H2O = a 2-oxocarboxylate + H2O2 + NH4(+). The catalysed reaction is D-alanine + O2 + H2O = pyruvate + H2O2 + NH4(+). It catalyses the reaction D-glutamate + O2 + H2O = H2O2 + 2-oxoglutarate + NH4(+). The enzyme catalyses D-serine + O2 + H2O = 3-hydroxypyruvate + H2O2 + NH4(+). It carries out the reaction D-phenylalanine + O2 + H2O = 3-phenylpyruvate + H2O2 + NH4(+). The catalysed reaction is D-arginine + O2 + H2O = 5-guanidino-2-oxopentanoate + H2O2 + NH4(+). It catalyses the reaction D-methionine + O2 + H2O = 4-methylsulfanyl-2-oxobutanoate + H2O2 + NH4(+). The enzyme catalyses D-leucine + O2 + H2O = 4-methyl-2-oxopentanoate + H2O2 + NH4(+). It carries out the reaction D-lysine + O2 + H2O = 6-amino-2-oxohexanoate + H2O2 + NH4(+). The catalysed reaction is D-valine + O2 + H2O = 3-methyl-2-oxobutanoate + H2O2 + NH4(+). It catalyses the reaction D-histidine + O2 + H2O = 3-(imidazol-5-yl)pyruvate + H2O2 + NH4(+). The enzyme catalyses D-glutamine + O2 + H2O = 2-oxoglutaramate + H2O2 + NH4(+). It carries out the reaction D-isoleucine + O2 + H2O = (R)-3-methyl-2-oxopentanoate + H2O2 + NH4(+). The catalysed reaction is D-allo-isoleucine + O2 + H2O = (S)-3-methyl-2-oxopentanoate + H2O2 + NH4(+). It catalyses the reaction D-threonine + O2 + H2O = (S)-3-hydroxy-2-oxobutanoate + H2O2 + NH4(+). The enzyme catalyses D-asparagine + O2 + H2O = 2-oxosuccinamate + H2O2 + NH4(+). It carries out the reaction D-tryptophan + O2 + H2O = indole-3-pyruvate + H2O2 + NH4(+). The catalysed reaction is D-tyrosine + O2 + H2O = 3-(4-hydroxyphenyl)pyruvate + H2O2 + NH4(+). Its activity is regulated as follows. Partially inhibited by benzoate, crotonate, and D-malate. Its function is as follows. Catalyzes the oxidative deamination of D-amino acids with broad substrate specificity. Enables the organism to utilize D-amino acids as a source of nutrients. Unusually, has high activity on D-glutamate. The chain is D-amino-acid oxidase from Talaromyces emersonii (Thermophilic fungus).